The primary structure comprises 887 residues: Lon protease homolog 2, peroxisomal (887 aa).

The 246-residue stretch at L11–L256 folds into the Lon N-terminal domain. The interval Y72–Q101 is disordered. G409–T416 serves as a coordination point for ATP. The Lon proteolytic domain maps to V693–G878. Residues S784 and K827 contribute to the active site. Residues A885–L887 carry the Microbody targeting signal motif.

It belongs to the peptidase S16 family.

It localises to the peroxisome matrix. It catalyses the reaction Hydrolysis of proteins in presence of ATP.. ATP-dependent serine protease that mediates the selective degradation of misfolded and unassembled polypeptides in the peroxisomal matrix. Necessary for type 2 peroxisome targeting signal (PTS2)-containing protein processing and facilitates peroxisome matrix protein import. The protein is Lon protease homolog 2, peroxisomal of Spinacia oleracea (Spinach).